A 599-amino-acid chain; its full sequence is E3 ubiquitin-protein ligase Kcmf1 (599 aa).

A ZZ-type zinc finger spans residues 4-60 (HEGVSCDSCLKSNFNGRRYKCLICYDYDLCADCYEDGVTSTRHLVEHPMQCILTRSD). Cys9, Cys12, Cys24, Cys27, Cys33, Cys36, His46, and His50 together coordinate Zn(2+). The segment at 78 to 101 (FTCPYCKKMGFSDATLLEHVSAEH) adopts a C2H2-type zinc-finger fold. Disordered stretches follow at residues 155-193 (HGGG…PSGR), 229-253 (DRQQ…VSTS), 269-294 (GSGG…NLRT), 466-486 (VEQQ…VNQM), and 507-599 (NTTQ…PDTR). 2 stretches are compositionally biased toward low complexity: residues 160-170 (RRIPGRTLGGP) and 180-192 (SSSS…SPSG). Over residues 269–285 (GSGGSGAVGSGSGGGSG) the composition is skewed to gly residues. Positions 513-532 (GTGGLGGAGATAAPGGGASG) are enriched in gly residues. Residues 538 to 547 (TADRGIERRS) show a composition bias toward basic and acidic residues. The segment covering 559–593 (SQQPQQQQQSTANPAASQQKYKQNASAATAAGNTN) has biased composition (low complexity).

This sequence belongs to the KCMF1 family. Interacts with poe.

It catalyses the reaction S-ubiquitinyl-[E2 ubiquitin-conjugating enzyme]-L-cysteine + [acceptor protein]-L-lysine = [E2 ubiquitin-conjugating enzyme]-L-cysteine + N(6)-ubiquitinyl-[acceptor protein]-L-lysine.. Has intrinsic E3 ubiquitin ligase activity and promotes ubiquitination. Involved in the negative regulation of the Ras/MAPK signaling pathway in the wing by acting with the E2 enzyme Unc6 and the putative E3 ligases poe and Ufd4 to mediate the ubiquitination and proteasomal degradation of rl/MAPK. The polypeptide is E3 ubiquitin-protein ligase Kcmf1 (Drosophila melanogaster (Fruit fly)).